The sequence spans 38 residues: Natriuretic peptide DNP (38 aa).

The cysteines at positions 7 and 23 are disulfide-linked. The segment at 19 to 38 (SNLGCPSLRDPRPNAPSTSA) is disordered.

Belongs to the natriuretic peptide family. Expressed by the venom gland.

The protein resides in the secreted. In terms of biological role, exhibits vasodilator, natriuretic and diuretic properties in animal models and human tissues. Acts by stimulating cGMP via the natriuretic peptide receptor 1 (NPR1). Is a poor agonist of the atrial natriuretic peptide receptor 2 (NPR2). Is not degraded by neutral endopeptidase (NEP/MME). Binds to atrial natriuretic peptide clearance receptor (NPR-C/NPR3), which may be responsible of the removal of DNP from the circulation. Increases calcium uptake and induces histamine release from rat peritoneal mast cells. Increases calcium-activated potassium (KCa) current in gastric antral circular smooth muscle cells by increasing cGMP production and activating inositol trisphosphate receptors (IP3Rs). In vivo, reduces both systolic and diastolic blood pressure with no effect on heart rate, when intravenously injected in conscious rabbits. In Dendroaspis angusticeps (Eastern green mamba), this protein is Natriuretic peptide DNP.